A 357-amino-acid chain; its full sequence is Holliday junction branch migration complex subunit RuvB (357 aa).

The tract at residues 1-27 is disordered; sequence MGRFSNADGPGDDADEREVTPALTVGE. Residues 1 to 195 form a large ATPase domain (RuvB-L) region; sequence MGRFSNADGP…FGFTAHMDFY (195 aa). ATP-binding positions include Leu-34, Arg-35, Gly-76, Lys-79, Thr-80, Ser-81, 142–144, Arg-185, Tyr-195, and Arg-232; that span reads EDF. Residue Thr-80 participates in Mg(2+) binding. The segment at 196–266 is small ATPAse domain (RuvB-S); sequence EPAELERVLA…IAKYALEVYD (71 aa). The tract at residues 269–357 is head domain (RuvB-H); that stretch reads ELGLDRLDRA…GGLGQVGLFE (89 aa). The DNA site is built by Arg-324 and Arg-329.

The protein belongs to the RuvB family. As to quaternary structure, homohexamer. Forms an RuvA(8)-RuvB(12)-Holliday junction (HJ) complex. HJ DNA is sandwiched between 2 RuvA tetramers; dsDNA enters through RuvA and exits via RuvB. An RuvB hexamer assembles on each DNA strand where it exits the tetramer. Each RuvB hexamer is contacted by two RuvA subunits (via domain III) on 2 adjacent RuvB subunits; this complex drives branch migration. In the full resolvosome a probable DNA-RuvA(4)-RuvB(12)-RuvC(2) complex forms which resolves the HJ.

The protein localises to the cytoplasm. The enzyme catalyses ATP + H2O = ADP + phosphate + H(+). The RuvA-RuvB-RuvC complex processes Holliday junction (HJ) DNA during genetic recombination and DNA repair, while the RuvA-RuvB complex plays an important role in the rescue of blocked DNA replication forks via replication fork reversal (RFR). RuvA specifically binds to HJ cruciform DNA, conferring on it an open structure. The RuvB hexamer acts as an ATP-dependent pump, pulling dsDNA into and through the RuvAB complex. RuvB forms 2 homohexamers on either side of HJ DNA bound by 1 or 2 RuvA tetramers; 4 subunits per hexamer contact DNA at a time. Coordinated motions by a converter formed by DNA-disengaged RuvB subunits stimulates ATP hydrolysis and nucleotide exchange. Immobilization of the converter enables RuvB to convert the ATP-contained energy into a lever motion, pulling 2 nucleotides of DNA out of the RuvA tetramer per ATP hydrolyzed, thus driving DNA branch migration. The RuvB motors rotate together with the DNA substrate, which together with the progressing nucleotide cycle form the mechanistic basis for DNA recombination by continuous HJ branch migration. Branch migration allows RuvC to scan DNA until it finds its consensus sequence, where it cleaves and resolves cruciform DNA. This chain is Holliday junction branch migration complex subunit RuvB, found in Mycolicibacterium gilvum (strain PYR-GCK) (Mycobacterium gilvum (strain PYR-GCK)).